Consider the following 741-residue polypeptide: Multifunctional procollagen lysine hydroxylase and glycosyltransferase LH3 (741 aa).

Residues 1–27 (MAASVPEPRLLLLLLLLLPPLPPVTSA) form the signal peptide. Residues 28 to 293 (SDRPRGANPV…FCNLNRRTLP (266 aa)) form a required for glycosyltransferase activity region. 47–49 (VAT) is a UDP binding site. N66 is a glycosylation site (N-linked (GlcNAc...) asparagine). The Mn(2+) site is built by D115, D118, and H256. 115–117 (DSY) provides a ligand contact to UDP. 259 to 262 (GPTK) provides a ligand contact to UDP. 2 disulfides stabilise this stretch: C282–C285 and C382–C388. An accessory region region spans residues 298–523 (PPRVLLAVFV…EFGRLLSTSH (226 aa)). A glycan (N-linked (GlcNAc...) asparagine) is linked at N551. A disulfide bridge connects residues C566 and C701. Residues R602 and Y659 each coordinate 2-oxoglutarate. A Fe2OG dioxygenase domain is found at 650–741 (RAVMNFVVRY…RYIMVSFVDP (92 aa)). Positions 670 and 672 each coordinate Fe cation. Residues 675 to 718 (TFTLNVALNHKGVDYEGGGCRFLRYDCRVSSPRKGWALLHPGRL) are important for dimerization. Residue N679 participates in 2-oxoglutarate binding. H722 contributes to the Fe cation binding site. Residue R732 participates in 2-oxoglutarate binding.

In terms of assembly, homodimer. It depends on Fe(2+) as a cofactor. Requires L-ascorbate as cofactor. Mn(2+) is required as a cofactor. As to expression, detected in heart and bone.

The protein localises to the rough endoplasmic reticulum. It localises to the endoplasmic reticulum lumen. Its subcellular location is the endoplasmic reticulum membrane. The protein resides in the secreted. It is found in the extracellular space. The enzyme catalyses L-lysyl-[collagen] + 2-oxoglutarate + O2 = (5R)-5-hydroxy-L-lysyl-[collagen] + succinate + CO2. It catalyses the reaction (5R)-5-hydroxy-L-lysyl-[collagen] + UDP-alpha-D-galactose = (5R)-5-O-(beta-D-galactosyl)-5-hydroxy-L-lysyl-[collagen] + UDP + H(+). It carries out the reaction (5R)-5-O-(beta-D-galactosyl)-5-hydroxy-L-lysyl-[collagen] + UDP-alpha-D-glucose = (5R)-5-O-[alpha-D-glucosyl-(1-&gt;2)-beta-D-galactosyl]-5-hydroxy-L-lysyl-[collagen] + UDP + H(+). In terms of biological role, multifunctional enzyme that catalyzes a series of post-translational modifications on Lys residues in procollagen. Plays a redundant role in catalyzing the formation of hydroxylysine residues in -Xaa-Lys-Gly- sequences in collagens. Plays a redundant role in catalyzing the transfer of galactose onto hydroxylysine groups, giving rise to galactosyl 5-hydroxylysine. Has an essential role by catalyzing the subsequent transfer of glucose moieties, giving rise to 1,2-glucosylgalactosyl-5-hydroxylysine residues. Catalyzes hydroxylation and glycosylation of Lys residues in the MBL1 collagen-like domain, giving rise to hydroxylysine and 1,2-glucosylgalactosyl-5-hydroxylysine residues. Catalyzes hydroxylation and glycosylation of Lys residues in the ADIPOQ collagen-like domain, giving rise to hydroxylysine and 1,2-glucosylgalactosyl-5-hydroxylysine residues. Essential for normal biosynthesis and secretion of type IV collagens. Essential for normal formation of basement membranes. This is Multifunctional procollagen lysine hydroxylase and glycosyltransferase LH3 (Plod3) from Rattus norvegicus (Rat).